A 122-amino-acid chain; its full sequence is Acyl carrier protein 1, mitochondrial (122 aa).

The transit peptide at 1–34 (MALRNAILRHLRVPVQTLGLNQSKIGFLGTIRSF) directs the protein to the mitochondrion. Positions 44 to 119 (EAVVDRVLDV…LAIEYVYNHP (76 aa)) constitute a Carrier domain. Serine 79 is subject to O-(pantetheine 4'-phosphoryl)serine.

The protein belongs to the acyl carrier protein (ACP) family. In terms of assembly, complex I is composed of at least 49 different subunits. 4'-phosphopantetheine is transferred from CoA to a specific serine of the apo-ACP-like protein.

Its subcellular location is the mitochondrion. It functions in the pathway lipid metabolism; fatty acid biosynthesis. Functionally, carrier of the growing fatty acid chain in fatty acid biosynthesis. May be involved in the synthesis of short and medium chain fatty acids. Accessory and non-catalytic subunit of the mitochondrial membrane respiratory chain NADH dehydrogenase (Complex I), which functions in the transfer of electrons from NADH to the respiratory chain. The protein is Acyl carrier protein 1, mitochondrial (MTACP1) of Arabidopsis thaliana (Mouse-ear cress).